The primary structure comprises 201 residues: FMN-dependent NADH:quinone oxidoreductase (201 aa).

Residues S10, 16 to 18 (SQS), 95 to 98 (MYNF), and 139 to 142 (TTGG) each bind FMN.

It belongs to the azoreductase type 1 family. As to quaternary structure, homodimer. The cofactor is FMN.

The enzyme catalyses 2 a quinone + NADH + H(+) = 2 a 1,4-benzosemiquinone + NAD(+). It catalyses the reaction N,N-dimethyl-1,4-phenylenediamine + anthranilate + 2 NAD(+) = 2-(4-dimethylaminophenyl)diazenylbenzoate + 2 NADH + 2 H(+). In terms of biological role, quinone reductase that provides resistance to thiol-specific stress caused by electrophilic quinones. Its function is as follows. Also exhibits azoreductase activity. Catalyzes the reductive cleavage of the azo bond in aromatic azo compounds to the corresponding amines. The protein is FMN-dependent NADH:quinone oxidoreductase of Tolumonas auensis (strain DSM 9187 / NBRC 110442 / TA 4).